Here is a 335-residue protein sequence, read N- to C-terminus: Large ribosomal subunit protein uL3 (335 aa).

Residues 1–20 (MATIHRPRRGSLAFSPRKRA) are disordered.

This sequence belongs to the universal ribosomal protein uL3 family. As to quaternary structure, part of the 50S ribosomal subunit. Forms a cluster with proteins L14 and L24e.

Functionally, one of the primary rRNA binding proteins, it binds directly near the 3'-end of the 23S rRNA, where it nucleates assembly of the 50S subunit. This Methanothrix thermoacetophila (strain DSM 6194 / JCM 14653 / NBRC 101360 / PT) (Methanosaeta thermophila) protein is Large ribosomal subunit protein uL3.